A 291-amino-acid chain; its full sequence is Peptide methionine sulfoxide reductase MsrB/MsrA (291 aa).

In terms of domain architecture, MsrB spans 1–124 (MLANLQHLSD…NSAALRFVAR (124 aa)). The active-site Nucleophile is Cys-113. The segment at 127-284 (GTALFAAGCF…PGGYCHVSLH (158 aa)) is peptide methionine sulfoxide reductase A. Residue Cys-135 is part of the active site.

The protein in the N-terminal section; belongs to the MsrB Met sulfoxide reductase family. This sequence in the C-terminal section; belongs to the MsrA Met sulfoxide reductase family.

The enzyme catalyses L-methionyl-[protein] + [thioredoxin]-disulfide + H2O = L-methionyl-(R)-S-oxide-[protein] + [thioredoxin]-dithiol. The catalysed reaction is L-methionyl-[protein] + [thioredoxin]-disulfide + H2O = L-methionyl-(S)-S-oxide-[protein] + [thioredoxin]-dithiol. It catalyses the reaction [thioredoxin]-disulfide + L-methionine + H2O = L-methionine (S)-S-oxide + [thioredoxin]-dithiol. Has an important function as a repair enzyme for proteins that have been inactivated by oxidation. Catalyzes the reversible oxidation-reduction of methionine sulfoxide in proteins to methionine. This Treponema pallidum (strain Nichols) protein is Peptide methionine sulfoxide reductase MsrB/MsrA (msrAB).